Here is a 183-residue protein sequence, read N- to C-terminus: NAD(P)H-quinone oxidoreductase subunit I, chloroplastic (183 aa).

2 4Fe-4S ferredoxin-type domains span residues 55 to 84 (GRIH…VDWE) and 95 to 124 (KNYS…MTEE). [4Fe-4S] cluster contacts are provided by Cys64, Cys67, Cys70, Cys74, Cys104, Cys107, Cys110, and Cys114.

This sequence belongs to the complex I 23 kDa subunit family. NDH is composed of at least 16 different subunits, 5 of which are encoded in the nucleus. The cofactor is [4Fe-4S] cluster.

Its subcellular location is the plastid. It is found in the chloroplast thylakoid membrane. The catalysed reaction is a plastoquinone + NADH + (n+1) H(+)(in) = a plastoquinol + NAD(+) + n H(+)(out). It carries out the reaction a plastoquinone + NADPH + (n+1) H(+)(in) = a plastoquinol + NADP(+) + n H(+)(out). Its function is as follows. NDH shuttles electrons from NAD(P)H:plastoquinone, via FMN and iron-sulfur (Fe-S) centers, to quinones in the photosynthetic chain and possibly in a chloroplast respiratory chain. The immediate electron acceptor for the enzyme in this species is believed to be plastoquinone. Couples the redox reaction to proton translocation, and thus conserves the redox energy in a proton gradient. The chain is NAD(P)H-quinone oxidoreductase subunit I, chloroplastic from Marchantia polymorpha (Common liverwort).